The chain runs to 369 residues: Queuine tRNA-ribosyltransferase (369 aa).

Residue Asp-89 is the Proton acceptor of the active site. Substrate-binding positions include 89–93, Asp-142, Gln-184, and Gly-211; that span reads DSGGF. The RNA binding stretch occupies residues 242-248; the sequence is GGGSPEL. The active-site Nucleophile is the Asp-261. The segment at 266–270 is RNA binding; important for wobble base 34 recognition; that stretch reads TRIAR. Zn(2+) contacts are provided by Cys-299, Cys-301, Cys-304, and His-330.

This sequence belongs to the queuine tRNA-ribosyltransferase family. Homodimer. Within each dimer, one monomer is responsible for RNA recognition and catalysis, while the other monomer binds to the replacement base PreQ1. Requires Zn(2+) as cofactor.

The catalysed reaction is 7-aminomethyl-7-carbaguanine + guanosine(34) in tRNA = 7-aminomethyl-7-carbaguanosine(34) in tRNA + guanine. The protein operates within tRNA modification; tRNA-queuosine biosynthesis. In terms of biological role, catalyzes the base-exchange of a guanine (G) residue with the queuine precursor 7-aminomethyl-7-deazaguanine (PreQ1) at position 34 (anticodon wobble position) in tRNAs with GU(N) anticodons (tRNA-Asp, -Asn, -His and -Tyr). Catalysis occurs through a double-displacement mechanism. The nucleophile active site attacks the C1' of nucleotide 34 to detach the guanine base from the RNA, forming a covalent enzyme-RNA intermediate. The proton acceptor active site deprotonates the incoming PreQ1, allowing a nucleophilic attack on the C1' of the ribose to form the product. After dissociation, two additional enzymatic reactions on the tRNA convert PreQ1 to queuine (Q), resulting in the hypermodified nucleoside queuosine (7-(((4,5-cis-dihydroxy-2-cyclopenten-1-yl)amino)methyl)-7-deazaguanosine). The sequence is that of Queuine tRNA-ribosyltransferase from Thermotoga sp. (strain RQ2).